Consider the following 1426-residue polypeptide: Ferlin 2 (1426 aa).

5 consecutive C2 domains span residues 1–111, 161–279, 512–638, 1031–1154, and 1189–1318; these read MGKT…QIRK, RKAV…PRWF, EKSK…ESPT, SEDR…QKSM, and KAGE…TLNS. Positions 1357-1377 are disordered; that stretch reads SKPVGLGREPPNRDPRLTTPQ. A compositionally biased stretch (basic and acidic residues) spans 1366 to 1377; the sequence is PPNRDPRLTTPQ. A helical transmembrane segment spans residues 1404–1424; it reads VAAVVFLSIWIFVVAFLYPSL.

The protein belongs to the ferlin family.

It is found in the membrane. The protein resides in the inner membrane complex. Its subcellular location is the cytoplasmic vesicle. It localises to the secretory vesicle. The protein localises to the rhoptry. Functionally, regulates rhoptry secretion. Required for completing the lytic cycle. Required for host cell invasion. Not required for microneme secretion and conoid extrusion. This chain is Ferlin 2, found in Toxoplasma gondii.